A 201-amino-acid polypeptide reads, in one-letter code: MYB-like transcription factor EOBI (201 aa).

HTH myb-type domains are found at residues 10–62 (DVEV…LNYL) and 63–117 (RPDV…QKHI). 2 DNA-binding regions (H-T-H motif) span residues 38-62 (WNSLARSAGLKRTGKSCRLRWLNYL) and 90-113 (WSKIAKHLPGRTDNEIKNYWRTRI). The interval 121–170 (DQNMKKPSKCEQNDQKAISTSQASTGPTDTIDSYSPSSYTENTNNNMENI) is disordered. Residues 135–159 (QKAISTSQASTGPTDTIDSYSPSSY) show a composition bias toward polar residues. A compositionally biased stretch (low complexity) spans 160 to 169 (TENTNNNMEN).

In terms of tissue distribution, expressed exclusively in flower organs. Accumulates mostly in flower limbs, to a lower extent in pistils and flower tubes, and, at low levels, in stamens.

The protein localises to the nucleus. MYB-type transcription factor controlling the production of volatile organic compounds (VOCs), including floral volatile benzenoids and phenylpropanoids (FVBP), in flowers of fragrant cultivars (e.g. cv. Mitchell and cv. V26) by regulating the expression of ODO1, a key regulator of the shikimate pathway, and of several biosynthetic floral scent-related genes (e.g. IGS, EGS, BSMT1, BSMT2, PAL1, PAL2, EPSPS, DAHPS, CS, CM1, ADT1 and PPA-AT). Binds to and activates the promoters of at least ODO1, IGS1 and PAL1. The sequence is that of MYB-like transcription factor EOBI from Petunia hybrida (Petunia).